Here is a 286-residue protein sequence, read N- to C-terminus: Oxidoreductase clz15 (286 aa).

It belongs to the asaB hydroxylase/desaturase family.

It participates in secondary metabolite biosynthesis. Its function is as follows. Oxidoreductase; part of the gene cluster that mediates the biosynthesis of squalestatin S1 (SQS1, also known as zaragozic acid A), a heavily oxidized fungal polyketide that offers potent cholesterol lowering activity by targeting squalene synthase (SS). SQS1 is composed of a 2,8-dioxobicyclic[3.2.1]octane-3,4,5-tricarboxyclic acid core that is connected to two lipophilic polyketide arms. These initial steps feature the priming of an unusual benzoic acid starter unit onto the highly reducing polyketide synthase clz14, followed by oxaloacetate extension and product release to generate a tricarboxylic acid containing product. The phenylalanine ammonia lyase (PAL) clz10 and the acyl-CoA ligase clz12 are involved in transforming phenylalanine into benzoyl-CoA. The citrate synthase-like protein clz17 is involved in connecting the C-alpha-carbons of the hexaketide chain and oxaloacetate to afford the tricarboxylic acid unit. The potential hydrolytic enzymes, clz11 and clz13, are in close proximity to pks2 and may participate in product release. On the other side, the tetraketide arm is synthesized by a the squalestatin tetraketide synthase clz2 and enzymatically esterified to the core in the last biosynthetic step, by the acetyltransferase clz6. The biosynthesis of the tetraketide must involve 3 rounds of chain extension. After the first and second rounds methyl-transfer occurs, and in all rounds of extension the ketoreductase and dehydratase are active. The enoyl reductase and C-MeT of clz2 are not active in the final round of extension. The acetyltransferase clz6 appears to have a broad substrate selectivity for its acyl CoA substrate, allowing the in vitro synthesis of novel squalestatins. The biosynthesis of SQS1 requires several oxidative steps likely performed by oxidoreductases clz3, clz15 and clz16. Finally, in support of the identification of the cluster as being responsible for SQS1 production, the cluster contains a gene encoding a putative squalene synthase (SS) clz20, suggesting a likely mechanism for self-resistance. In Cochliobolus lunatus (Filamentous fungus), this protein is Oxidoreductase clz15.